A 286-amino-acid polypeptide reads, in one-letter code: Deaminated glutathione amidase (286 aa).

The CN hydrolase domain occupies 4 to 252 (ANVALLQLCS…VSALKVKIET (249 aa)). The active-site Proton acceptor is Glu-42. Residue Lys-115 is part of the active site. Cys-157 functions as the Nucleophile in the catalytic mechanism.

It belongs to the carbon-nitrogen hydrolase superfamily. NIT1/NIT2 family.

The enzyme catalyses N-(4-oxoglutaryl)-L-cysteinylglycine + H2O = L-cysteinylglycine + 2-oxoglutarate. Functionally, hydrolyzes deaminated glutathione (dGSH, 2-oxoglutaramate) to alpha-ketoglutarate (alpha-KG) and cysteinylglycine (specific activity 6.50 umol/min/mg), has less activity against alpha-ketoglutaramate (a-KGM, specific activity 0.20 umol/min/mg), very little activity on glutathione and none on L-glutamine. May function as a metabolite repair enzyme. In Yersinia enterocolitica, this protein is Deaminated glutathione amidase.